Reading from the N-terminus, the 336-residue chain is Ornithine carbamoyltransferase, catabolic (336 aa).

Carbamoyl phosphate-binding positions include 57–60 (STRT), Gln-84, Arg-108, and 135–138 (HPTQ). L-ornithine contacts are provided by residues Asn-168, Asp-232, and 236 to 237 (SM). Carbamoyl phosphate contacts are provided by residues 274 to 275 (CL) and Arg-321.

This sequence belongs to the aspartate/ornithine carbamoyltransferase superfamily. OTCase family. As to quaternary structure, nonameric or dodecamer (tetramer of trimers).

It is found in the cytoplasm. The catalysed reaction is carbamoyl phosphate + L-ornithine = L-citrulline + phosphate + H(+). It participates in amino-acid degradation; L-arginine degradation via ADI pathway; carbamoyl phosphate from L-arginine: step 2/2. With respect to regulation, inhibited by 2-aminopentanoic acid (norvaline). Activated by phosphate and nucleoside monophosphates such as AMP, GMP, CMP, UMP. Allosterically inhibited by the polyamines such as spermidine and putrescine. Its function is as follows. Involved in the catabolism of arginine. Catalyzes the phosphorolysis of citrulline, the reverse reaction of the biosynthetic one, yielding ornithine and carbamoyl phosphate which serve to generate ATP from ADP. This catabolic OTCase does not carry out the biosynthetic reaction because of a poor affinity and a marked cooperativity for carbamoyl phosphate. The chain is Ornithine carbamoyltransferase, catabolic from Pseudomonas aeruginosa (strain ATCC 15692 / DSM 22644 / CIP 104116 / JCM 14847 / LMG 12228 / 1C / PRS 101 / PAO1).